A 108-amino-acid polypeptide reads, in one-letter code: uncharacterized protein (108 aa).

Asparagine 33 carries an N-linked (GlcNAc...) asparagine glycan.

In terms of processing, N-glycosylated.

This is an uncharacterized protein from Saccharomyces cerevisiae (strain ATCC 204508 / S288c) (Baker's yeast).